Here is a 385-residue protein sequence, read N- to C-terminus: Ethanolamine kinase 2 (385 aa).

This sequence belongs to the choline/ethanolamine kinase family. In terms of tissue distribution, expressed in testis and liver. Low expression in ovary and kidney.

The enzyme catalyses ethanolamine + ATP = phosphoethanolamine + ADP + H(+). It functions in the pathway phospholipid metabolism; phosphatidylethanolamine biosynthesis; phosphatidylethanolamine from ethanolamine: step 1/3. Its function is as follows. Highly specific for ethanolamine phosphorylation. Does not have choline kinase activity. The chain is Ethanolamine kinase 2 (Etnk2) from Mus musculus (Mouse).